The following is a 300-amino-acid chain: D-alanine--D-alanine ligase (300 aa).

The ATP-grasp domain maps to 99–293; sequence KKILKYANIN…FAELLNSIVK (195 aa). 126-181 is an ATP binding site; the sequence is IEKIGYPVFVKPNSGGSSVATNLVKDKEGIKEAVELALKYDKEVMIENYTKGEEIT. Residues D248, E260, and N262 each coordinate Mg(2+).

This sequence belongs to the D-alanine--D-alanine ligase family. Mg(2+) serves as cofactor. Requires Mn(2+) as cofactor.

The protein resides in the cytoplasm. The enzyme catalyses 2 D-alanine + ATP = D-alanyl-D-alanine + ADP + phosphate + H(+). Its pathway is cell wall biogenesis; peptidoglycan biosynthesis. Its function is as follows. Cell wall formation. This is D-alanine--D-alanine ligase from Clostridium botulinum (strain Okra / Type B1).